The following is a 111-amino-acid chain: Large ribosomal subunit protein uL22 (111 aa).

This sequence belongs to the universal ribosomal protein uL22 family. Part of the 50S ribosomal subunit.

Functionally, this protein binds specifically to 23S rRNA; its binding is stimulated by other ribosomal proteins, e.g. L4, L17, and L20. It is important during the early stages of 50S assembly. It makes multiple contacts with different domains of the 23S rRNA in the assembled 50S subunit and ribosome. The globular domain of the protein is located near the polypeptide exit tunnel on the outside of the subunit, while an extended beta-hairpin is found that lines the wall of the exit tunnel in the center of the 70S ribosome. The polypeptide is Large ribosomal subunit protein uL22 (Stenotrophomonas maltophilia (strain R551-3)).